A 320-amino-acid chain; its full sequence is Polyisoprenyl-teichoic acid--peptidoglycan teichoic acid transferase TagU (320 aa).

At 1–15 the chain is on the cytoplasmic side; sequence MVSRTERKQHKKRRK. The helical; Signal-anchor for type II membrane protein transmembrane segment at 16 to 36 threads the bilayer; the sequence is WPFWLGGILLVLLLLISGGIF. The Extracellular portion of the chain corresponds to 37–320; the sequence is LIYNQVGAVV…SEITGHMQEQ (284 aa).

Belongs to the LytR/CpsA/Psr (LCP) family.

It is found in the cell membrane. Its pathway is cell wall biogenesis. In terms of biological role, may catalyze the final step in cell wall teichoic acid biosynthesis, the transfer of the anionic cell wall polymers (APs) from their lipid-linked precursor to the cell wall peptidoglycan (PG). This Oceanobacillus iheyensis (strain DSM 14371 / CIP 107618 / JCM 11309 / KCTC 3954 / HTE831) protein is Polyisoprenyl-teichoic acid--peptidoglycan teichoic acid transferase TagU.